The following is a 486-amino-acid chain: Malonate-semialdehyde dehydrogenase (486 aa).

5 residues coordinate NAD(+): F154, K178, E181, R182, and S231. C286 serves as the catalytic Nucleophile. E386 contacts NAD(+).

This sequence belongs to the aldehyde dehydrogenase family. IolA subfamily. In terms of assembly, homotetramer.

It carries out the reaction 3-oxopropanoate + NAD(+) + CoA + H2O = hydrogencarbonate + acetyl-CoA + NADH + H(+). The catalysed reaction is 2-methyl-3-oxopropanoate + NAD(+) + CoA + H2O = propanoyl-CoA + hydrogencarbonate + NADH + H(+). It functions in the pathway polyol metabolism; myo-inositol degradation into acetyl-CoA; acetyl-CoA from myo-inositol: step 7/7. Catalyzes the oxidation of malonate semialdehyde (MSA) and methylmalonate semialdehyde (MMSA) into acetyl-CoA and propanoyl-CoA, respectively. Is involved in a myo-inositol catabolic pathway. Bicarbonate, and not CO2, is the end-product of the enzymatic reaction. The chain is Malonate-semialdehyde dehydrogenase from Bacillus cereus (strain AH187).